The sequence spans 1136 residues: Nuclear pore complex protein Nup133 (1136 aa).

The disordered stretch occupies residues 1–26; it reads MFSPRGTPGSGRRQAPRTGGRRSVSA.

It belongs to the nucleoporin Nup133 family. Forms part of the Nup160 subcomplex in the nuclear pore which is composed of NUP160, NUP133, NUP107 and Nup96. This complex plays a role in RNA export and in tethering Nup98 and NUP153 to the nucleus. In terms of tissue distribution, widely expressed in the embryo and in adult tissues. Higher expression is observed in the brain, testes, ovary, skin, and kidney.

Its subcellular location is the nucleus. It localises to the nuclear pore complex. The protein localises to the chromosome. It is found in the centromere. The protein resides in the kinetochore. In terms of biological role, involved in poly(A)+ RNA transport. Involved in nephrogenesis. This is Nuclear pore complex protein Nup133 from Danio rerio (Zebrafish).